The sequence spans 103 residues: Small ribosomal subunit protein uS10 (103 aa).

Belongs to the universal ribosomal protein uS10 family. Part of the 30S ribosomal subunit.

In terms of biological role, involved in the binding of tRNA to the ribosomes. This Borrelia duttonii (strain Ly) protein is Small ribosomal subunit protein uS10.